A 351-amino-acid chain; its full sequence is Anthranilate phosphoribosyltransferase (351 aa).

Residues glycine 80, 83-84, threonine 88, 90-93, 108-116, and serine 120 each bind 5-phospho-alpha-D-ribose 1-diphosphate; these read GD, NIST, and KHGNRSITS. An anthranilate-binding site is contributed by glycine 80. A Mg(2+)-binding site is contributed by serine 92. Asparagine 111 serves as a coordination point for anthranilate. Anthranilate is bound at residue arginine 166. The Mg(2+) site is built by aspartate 229 and glutamate 230.

The protein belongs to the anthranilate phosphoribosyltransferase family. Homodimer. Mg(2+) serves as cofactor.

The enzyme catalyses N-(5-phospho-beta-D-ribosyl)anthranilate + diphosphate = 5-phospho-alpha-D-ribose 1-diphosphate + anthranilate. It functions in the pathway amino-acid biosynthesis; L-tryptophan biosynthesis; L-tryptophan from chorismate: step 2/5. In terms of biological role, catalyzes the transfer of the phosphoribosyl group of 5-phosphorylribose-1-pyrophosphate (PRPP) to anthranilate to yield N-(5'-phosphoribosyl)-anthranilate (PRA). In Chlorobaculum tepidum (strain ATCC 49652 / DSM 12025 / NBRC 103806 / TLS) (Chlorobium tepidum), this protein is Anthranilate phosphoribosyltransferase.